We begin with the raw amino-acid sequence, 333 residues long: D-alanine--D-alanine ligase (333 aa).

The 206-residue stretch at Lys124 to Met329 folds into the ATP-grasp domain. An ATP-binding site is contributed by Ala154 to Glu209. 3 residues coordinate Mg(2+): Asp283, Glu296, and Asn298.

It belongs to the D-alanine--D-alanine ligase family. The cofactor is Mg(2+). Mn(2+) is required as a cofactor.

Its subcellular location is the cytoplasm. The enzyme catalyses 2 D-alanine + ATP = D-alanyl-D-alanine + ADP + phosphate + H(+). It participates in cell wall biogenesis; peptidoglycan biosynthesis. In terms of biological role, cell wall formation. This chain is D-alanine--D-alanine ligase, found in Shewanella halifaxensis (strain HAW-EB4).